The sequence spans 552 residues: Arginine--tRNA ligase (552 aa).

Positions 129-139 (ANPTGPVTLAS) match the 'HIGH' region motif.

It belongs to the class-I aminoacyl-tRNA synthetase family. As to quaternary structure, monomer.

It localises to the cytoplasm. The enzyme catalyses tRNA(Arg) + L-arginine + ATP = L-arginyl-tRNA(Arg) + AMP + diphosphate. This is Arginine--tRNA ligase from Frankia alni (strain DSM 45986 / CECT 9034 / ACN14a).